The following is a 333-amino-acid chain: D-fructose 1,6-bisphosphatase class 2/sedoheptulose 1,7-bisphosphatase (333 aa).

4 residues coordinate Mn(2+): Asp33, Glu57, Asp85, and Glu88. Residues 88-90 (EGT), Tyr119, 164-166 (RTR), and 186-188 (DGD) each bind substrate. A Mn(2+)-binding site is contributed by Glu213.

This sequence belongs to the FBPase class 2 family. Homotetramer. Mn(2+) is required as a cofactor.

The enzyme catalyses beta-D-fructose 1,6-bisphosphate + H2O = beta-D-fructose 6-phosphate + phosphate. It carries out the reaction D-sedoheptulose 1,7-bisphosphate + H2O = D-sedoheptulose 7-phosphate + phosphate. It participates in carbohydrate biosynthesis; Calvin cycle. Its function is as follows. Catalyzes the hydrolysis of fructose 1,6-bisphosphate (Fru 1,6-P2) and sedoheptulose 1,7-bisphosphate (Sed 1,7-P2) to fructose 6-phosphate and sedoheptulose 7-phosphate, respectively. The polypeptide is D-fructose 1,6-bisphosphatase class 2/sedoheptulose 1,7-bisphosphatase (Prochlorococcus marinus (strain MIT 9312)).